The primary structure comprises 434 residues: ATP-dependent protease ATPase subunit HslU (434 aa).

Residues Val18, 60-65 (GVGKTE), Asp247, Glu312, and Arg384 each bind ATP.

This sequence belongs to the ClpX chaperone family. HslU subfamily. In terms of assembly, a double ring-shaped homohexamer of HslV is capped on each side by a ring-shaped HslU homohexamer. The assembly of the HslU/HslV complex is dependent on binding of ATP.

The protein localises to the cytoplasm. Its function is as follows. ATPase subunit of a proteasome-like degradation complex; this subunit has chaperone activity. The binding of ATP and its subsequent hydrolysis by HslU are essential for unfolding of protein substrates subsequently hydrolyzed by HslV. HslU recognizes the N-terminal part of its protein substrates and unfolds these before they are guided to HslV for hydrolysis. This chain is ATP-dependent protease ATPase subunit HslU, found in Phenylobacterium zucineum (strain HLK1).